The following is a 323-amino-acid chain: ATP synthase gamma chain (323 aa).

This sequence belongs to the ATPase gamma chain family. As to quaternary structure, F-type ATPases have 2 components, CF(1) - the catalytic core - and CF(0) - the membrane proton channel. CF(1) has five subunits: alpha(3), beta(3), gamma(1), delta(1), epsilon(1). CF(0) has three main subunits: a, b and c.

Its subcellular location is the cell inner membrane. Produces ATP from ADP in the presence of a proton gradient across the membrane. The gamma chain is believed to be important in regulating ATPase activity and the flow of protons through the CF(0) complex. The chain is ATP synthase gamma chain from Rickettsia africae (strain ESF-5).